The chain runs to 313 residues: Alpha-S1-casein (313 aa).

Residues 1 to 15 (MKLLILTCLVAAAFA) form the signal peptide. Positions 77–96 (ASEEQAMASAQEDSSISSSS) are enriched in low complexity. A disordered region spans residues 77-111 (ASEEQAMASAQEDSSISSSSEESEEAIPNITEQKN). Residues serine 90, serine 91, serine 93, serine 94, serine 95, and serine 96 each carry the phosphoserine modification. Repeat copies occupy residues 135–140 (LLQKAS), 141–146 (LAKQAS), 147–152 (LFQQPS), 153–158 (LVQQAS), 159–164 (LFQQPS), 165–170 (LLQQAS), 171–176 (LFQQPS), 177–182 (MAQQAS), 183–188 (LLQQLL), 189–194 (LAQQPS), 195–200 (LALQVS), 201–206 (PAQQSS), 207–212 (LVQQAF), 213–218 (LAQQAS), and 219–224 (LAQKHH). Positions 135 to 224 (LLQKASLAKQ…QQASLAQKHH (90 aa)) are 15 X 6 AA tandem repeats.

Belongs to the alpha-casein family. In terms of tissue distribution, mammary gland specific. Secreted in milk.

The protein resides in the secreted. In terms of biological role, important role in the capacity of milk to transport calcium phosphate. The chain is Alpha-S1-casein (Csn1s1) from Mus musculus (Mouse).